A 205-amino-acid polypeptide reads, in one-letter code: Alpha-1-acid glycoprotein (205 aa).

Positions 1–18 (MALHMVLVVLSLLPLLEA) are cleaved as a signal peptide. N-linked (GlcNAc...) asparagine glycans are attached at residues N25, N34, N76, N94, N104, and N134. A disulfide bond links C91 and C183.

Belongs to the calycin superfamily. Lipocalin family.

It is found in the secreted. Functionally, functions as a transport protein in the blood stream. Binds various ligands in the interior of its beta-barrel domain. Appears to function in modulating the activity of the immune system during the acute-phase reaction. The chain is Alpha-1-acid glycoprotein (Orm1) from Rattus norvegicus (Rat).